The following is a 79-amino-acid chain: Acyl carrier protein (79 aa).

Residues 2 to 77 enclose the Carrier domain; it reads SDIEERVKKI…SAIDYVNAHK (76 aa). Position 37 is an O-(pantetheine 4'-phosphoryl)serine (S37).

Belongs to the acyl carrier protein (ACP) family. Post-translationally, 4'-phosphopantetheine is transferred from CoA to a specific serine of apo-ACP by AcpS. This modification is essential for activity because fatty acids are bound in thioester linkage to the sulfhydryl of the prosthetic group.

Its subcellular location is the cytoplasm. Its pathway is lipid metabolism; fatty acid biosynthesis. In terms of biological role, carrier of the growing fatty acid chain in fatty acid biosynthesis. The protein is Acyl carrier protein of Pseudoalteromonas atlantica (strain T6c / ATCC BAA-1087).